Reading from the N-terminus, the 700-residue chain is Lutropin-choriogonadotropic hormone receptor (700 aa).

The signal sequence occupies residues 1–26 (MGRRVPALRQLLVLAMLVLKQSQLHS). Residues 27-362 (PELSGSRCPE…AFNPCEDIMG (336 aa)) lie on the Extracellular side of the membrane. An LRR 1 repeat occupies 52–75 (RAGLARLSLTYLPVKVIPSQAFRG). N-linked (GlcNAc...) asparagine glycosylation occurs at N103. 3 LRR repeats span residues 126–150 (LPRL…KISS), 176–200 (MNNE…AFNG), and 225–248 (ATGP…GLES). N-linked (GlcNAc...) asparagine glycosylation is found at N178 and N199. 3 N-linked (GlcNAc...) asparagine glycosylation sites follow: N295, N303, and N317. The residue at position 335 (Y335) is a Sulfotyrosine. Residues 363–390 (YAFLRVLIWLINILAIFGNLTVLFVLLT) traverse the membrane as a helical segment. Over 391–399 (SRYKLTVPR) the chain is Cytoplasmic. The chain crosses the membrane as a helical span at residues 400–422 (FLMCNLSFADFCMGLYLLLIASV). Topologically, residues 423–443 (DSQTKGQYYNHAIDWQTGSGC) are extracellular. An intrachain disulfide couples C443 to C518. A helical membrane pass occupies residues 444–466 (SAAGFFTVFASELSVYTLTVITL). The Cytoplasmic portion of the chain corresponds to 467-486 (ERWHTITYAVQLDQKLRLRH). A helical membrane pass occupies residues 487–509 (AIPIMLGGWIFSTLMATLPLVGV). Topologically, residues 510–529 (SSYMKVSICLPMDVESTLSQ) are extracellular. Residues 530 to 551 (VYILSILLLNAVAFVVICACYV) traverse the membrane as a helical segment. Topologically, residues 552 to 574 (RIYFAVQNPELTAPNKDTKIAKK) are cytoplasmic. A helical membrane pass occupies residues 575 to 598 (MAILIFTDFTCMAPISFFAISAAF). At 599 to 609 (KVPLITVTNSK) the chain is on the extracellular side. Residues 610–631 (VLLVLFYPVNSCANPFLYAVFT) traverse the membrane as a helical segment. At 632–700 (KAFQRDFFLL…QPTPPRVLIQ (69 aa)) the chain is on the cytoplasmic side. Residues C647 and C648 are each lipidated (S-palmitoyl cysteine).

It belongs to the G-protein coupled receptor 1 family. FSH/LSH/TSH subfamily. In terms of processing, sulfated.

Its subcellular location is the cell membrane. Its function is as follows. Receptor for lutropin-choriogonadotropic hormone. The activity of this receptor is mediated by G proteins which activate adenylate cyclase. This chain is Lutropin-choriogonadotropic hormone receptor (Lhcgr), found in Mus musculus (Mouse).